Consider the following 624-residue polypeptide: Kelch-like ECH-associated protein 1 (624 aa).

An S-(2-succinyl)cysteine modification is found at cysteine 38. Positions 77–149 (CDVTLQVKYE…AYTASISVGE (73 aa)) constitute a BTB domain. Residue arginine 135 forms an N5-[4-(S-L-cysteinyl)-5-methyl-1H-imidazol-2-yl]-L-ornithine (Arg-Cys) (interchain with C-151 in KEAP1) linkage. Cysteine 151 and cysteine 241 each carry S-(2-succinyl)cysteine. The residue at position 151 (cysteine 151) is an S-(2,3-dicarboxypropyl)cysteine; alternate. An S-nitrosocysteine; alternate modification is found at cysteine 151. Cysteine 151 participates in a covalent cross-link: N5-[4-(S-L-cysteinyl)-5-methyl-1H-imidazol-2-yl]-L-ornithine (Cys-Arg) (interchain with R-135 in KEAP1). One can recognise a BACK domain in the interval 184 to 286 (AIGIANFAEQ…TPRFLQTQLQ (103 aa)). S-(2,3-dicarboxypropyl)cysteine is present on residues cysteine 257 and cysteine 273. 2 positions are modified to S-(2-succinyl)cysteine: cysteine 288 and cysteine 319. An S-(2,3-dicarboxypropyl)cysteine; alternate modification is found at cysteine 288. 6 Kelch repeats span residues 327–372 (LIYT…VVGG), 373–423 (LLYA…VIDG), 424–470 (HIYA…VLNR), 471–517 (LLYA…VLHS), 519–564 (IYAA…VHQG), and 565–611 (RIYV…VTME). Cysteine 434 carries the S-cGMP-cysteine modification. Cysteine 613 bears the S-(2-succinyl)cysteine mark.

It belongs to the KEAP1 family. Component of the BCR(KEAP1) E3 ubiquitin ligase complex, at least composed of 2 molecules of CUL3, 2 molecules of KEAP1, and RBX1. Interacts with NFE2L2/NRF2; the interaction is direct. Forms a ternary complex with NFE2L2/NRF2 and PGAM5. Interacts with (phosphorylated) SQSTM1/p62; the interaction is direct and inactivates the BCR(KEAP1) complex by sequestering it in inclusion bodies, promoting its degradation. Interacts with NFE2L1. Interacts with BPTF and PTMA. Interacts with MAP1LC3B. Interacts indirectly with ENC1. Interacts with SESN1 and SESN2. Interacts with HSP90AA1 and HSP90AB1. Interacts with PGCKA1; this interaction prevents the ubiquitination of KEAP1 by TRIM25, thus protecting KEAP1 from degradation. Post-translationally, non-enzymatic covalent modifications of reactive cysteines by electrophile metabolites inactivate the BCR(KEAP1) complex. Accumulation of fumarate promotes the formation of cysteine S-succination (S-(2-succinyl)cysteine), leading to inactivate the BCR(KEAP1) complex and promote NFE2L2/NRF2 nuclear accumulation and activation. Nitric oxide-dependent 8-Nitro-cGMP formation promotes cysteine guanylation (S-cGMP-cysteine), leading to NFE2L2/NRF2 nuclear accumulation and activation. Itaconate, an anti-inflammatory metabolite generated in response to lipopolysaccharide, alkylates cysteines, activating NFE2L2/NRF2. Methylglyoxal, a reactive metabolite that accumulates when the glycolytic enzyme PGK1 is inhibited, promotes formation of a methylimidazole cross-link between proximal Cys-151 and Arg-135 on another KEAP1 molecule, resulting in an inactive dimer that inactivates the BCR(KEAP1) complex. In terms of processing, degraded via a proteasomal-independent process during selective autophagy: interaction with phosphorylated SQSTM1/p62 sequesters KEAP1 in inclusion bodies, leading to its degradation. Auto-ubiquitinated by the BCR(KEAP1) complex. Quinone-induced oxidative stress, but not sulforaphane, increases its ubiquitination. Ubiquitination and subsequent degradation is most pronounced following prolonged exposure of cells to oxidative stress, particularly in glutathione-deficient cells that are highly susceptible to oxidative stress. Deubiquitinated by USP25; leading to stabilization. Ubiquitinated by TRIM25; leading to degradation upon ER stress.

The protein resides in the cytoplasm. It localises to the nucleus. It participates in protein modification; protein ubiquitination. Ubiquitin ligase activity of the BCR(KEAP1) complex is inhibited by oxidative stress and electrophile metabolites such as sulforaphane. Electrophile metabolites react with reactive cysteine residues in KEAP1 and trigger non-enzymatic covalent modifications of these cysteine residues, leading to inactivate the ubiquitin ligase activity of the BCR(KEAP1) complex. Selective autophagy also inactivates the BCR(KEAP1) complex via interaction between KEAP1 and SQSTM1/p62, which sequesters the complex in inclusion bodies and promotes its degradation. Its function is as follows. Substrate-specific adapter of a BCR (BTB-CUL3-RBX1) E3 ubiquitin ligase complex that regulates the response to oxidative stress by targeting NFE2L2/NRF2 for ubiquitination. KEAP1 acts as a key sensor of oxidative and electrophilic stress: in normal conditions, the BCR(KEAP1) complex mediates ubiquitination and degradation of NFE2L2/NRF2, a transcription factor regulating expression of many cytoprotective genes. In response to oxidative stress, different electrophile metabolites trigger non-enzymatic covalent modifications of highly reactive cysteine residues in KEAP1, leading to inactivate the ubiquitin ligase activity of the BCR(KEAP1) complex, promoting NFE2L2/NRF2 nuclear accumulation and expression of phase II detoxifying enzymes. In response to selective autophagy, KEAP1 is sequestered in inclusion bodies following its interaction with SQSTM1/p62, leading to inactivation of the BCR(KEAP1) complex and activation of NFE2L2/NRF2. The BCR(KEAP1) complex also mediates ubiquitination of SQSTM1/p62, increasing SQSTM1/p62 sequestering activity and degradation. The BCR(KEAP1) complex also targets BPTF and PGAM5 for ubiquitination and degradation by the proteasome. The protein is Kelch-like ECH-associated protein 1 of Rattus norvegicus (Rat).